Here is a 376-residue protein sequence, read N- to C-terminus: MVPGYHRPAAVKVNLGAIRRNLENEMKHLDPGQKMLAVVKANAYGHGAVEVAKVAEEVGAAGFCVAVLDEGLQLRHADIVKPILVLGVVSPKYAPIAAVNNISLTVPNFEWLKEAEKYLAKENLQLKIHLGIDSGMGRIGFNEDDEFIEANKFLENNDQFFVEGMFAHFASADSADESYFEHQLEKFNHMKSLLTVKPKWIHVSNTAASIFHKNIKSDLVRFGIGIYGLNPSSNPASADLNPDIKLEPALSFESELTHVKTIHKGDGVSYGSTFVADKDTIIGTVPVGYADGWIRKFQGFKVKVGDKYCPIVGRICMDQFMVELPEKMPVGTKVVIISNNPDDPNNIKAAADYVNTIHYEVACLLNDRLPRIYYEK.

Lysine 40 (proton acceptor; specific for D-alanine) is an active-site residue. N6-(pyridoxal phosphate)lysine is present on lysine 40. A substrate-binding site is contributed by arginine 138. The active-site Proton acceptor; specific for L-alanine is tyrosine 270. Methionine 317 contacts substrate.

This sequence belongs to the alanine racemase family. Pyridoxal 5'-phosphate is required as a cofactor.

The enzyme catalyses L-alanine = D-alanine. It functions in the pathway amino-acid biosynthesis; D-alanine biosynthesis; D-alanine from L-alanine: step 1/1. In terms of biological role, catalyzes the interconversion of L-alanine and D-alanine. May also act on other amino acids. The polypeptide is Alanine racemase (alr) (Lactobacillus acidophilus (strain ATCC 700396 / NCK56 / N2 / NCFM)).